A 127-amino-acid polypeptide reads, in one-letter code: Fumarate reductase subunit C (127 aa).

3 consecutive transmembrane segments (helical) span residues 30 to 50, 67 to 87, and 107 to 127; these read ATVL…GSLV, IVVA…QTFF, and VVVL…LVIV.

The protein belongs to the FrdC family. As to quaternary structure, part of an enzyme complex containing four subunits: a flavoprotein (FrdA), an iron-sulfur protein (FrdB), and two hydrophobic anchor proteins (FrdC and FrdD).

It is found in the cell inner membrane. Functionally, anchors the catalytic components of the fumarate reductase complex to the cell membrane, binds quinones. This Aliivibrio fischeri (strain ATCC 700601 / ES114) (Vibrio fischeri) protein is Fumarate reductase subunit C.